Consider the following 170-residue polypeptide: Bifunctional protein PyrR (170 aa).

The short motif at 90–102 (LVLVDDVLMSGRT) is the PRPP-binding element.

The protein belongs to the purine/pyrimidine phosphoribosyltransferase family. PyrR subfamily.

It catalyses the reaction UMP + diphosphate = 5-phospho-alpha-D-ribose 1-diphosphate + uracil. Regulates the transcription of the pyrimidine nucleotide (pyr) operon in response to exogenous pyrimidines. Functionally, also displays a weak uracil phosphoribosyltransferase activity which is not physiologically significant. The sequence is that of Bifunctional protein PyrR from Pseudomonas paraeruginosa (strain DSM 24068 / PA7) (Pseudomonas aeruginosa (strain PA7)).